Here is a 342-residue protein sequence, read N- to C-terminus: N-acetyl-gamma-glutamyl-phosphate reductase (342 aa).

Cys-149 is an active-site residue.

This sequence belongs to the NAGSA dehydrogenase family. Type 1 subfamily.

It localises to the cytoplasm. The catalysed reaction is N-acetyl-L-glutamate 5-semialdehyde + phosphate + NADP(+) = N-acetyl-L-glutamyl 5-phosphate + NADPH + H(+). It functions in the pathway amino-acid biosynthesis; L-arginine biosynthesis; N(2)-acetyl-L-ornithine from L-glutamate: step 3/4. Functionally, catalyzes the NADPH-dependent reduction of N-acetyl-5-glutamyl phosphate to yield N-acetyl-L-glutamate 5-semialdehyde. This Roseobacter denitrificans (strain ATCC 33942 / OCh 114) (Erythrobacter sp. (strain OCh 114)) protein is N-acetyl-gamma-glutamyl-phosphate reductase.